A 492-amino-acid polypeptide reads, in one-letter code: High-affinity nickel transport protein (492 aa).

At 1 to 24 the chain is on the cytoplasmic side; sequence MLSRWTRRVNESRLAQRKLTLLGR. The helical transmembrane segment at 25–45 threads the bilayer; it reads AIALVVGELLFNAVCWIAAGI. Residues 46 to 50 are Extracellular-facing; the sequence is CFGKT. The helical transmembrane segment at 51–71 threads the bilayer; sequence DGILGLALLAWTIGLRHGLDA. At 72-94 the chain is on the cytoplasmic side; that stretch reads DHISAIDNATRQLVSQGQLPITC. The helical transmembrane segment at 95-115 threads the bilayer; that stretch reads GLFFSLGHSTIVIVVNVAIAV. At 116–136 the chain is on the extracellular side; sequence SVDIYDKLDRVGSIGGIVGAA. The helical transmembrane segment at 137 to 157 threads the bilayer; that stretch reads VSASFLFLIACLNIYFLVGAI. Topologically, residues 158–210 are cytoplasmic; the sequence is KQRRSMKRRQALGLPPDEDEGDPSKIYGGGCMVRVVGPILRAVDRPWKMYPVG. A helical membrane pass occupies residues 211–231; that stretch reads VLFGFGFDTASSIALLAISAI. Over 232-239 the chain is Extracellular; that stretch reads AQRGPNGD. Residues 240–260 traverse the membrane as a helical segment; the sequence is AISHGKIVILPFLFTAGMSLV. At 261 to 382 the chain is on the cytoplasmic side; the sequence is DSLDSILMLY…AKANTMSSLS (122 aa). Residues 383–403 traverse the membrane as a helical segment; that stretch reads IILTLLSILVALSISLIEIMG. Residues 404–439 are Extracellular-facing; sequence LIGDNCTQCQDAANDPDGGGLAGSWWRAWARANDQS. An N-linked (GlcNAc...) asparagine glycan is attached at asparagine 408. Residues 440 to 460 form a helical membrane-spanning segment; that stretch reads GYIGAAIVGCFAAILAGWYGA. At 461–492 the chain is on the cytoplasmic side; that stretch reads KWGKKKWKARRDANAAIVLEDNEDDAAETPVA.

It belongs to the NiCoT transporter (TC 2.A.52) family.

Its subcellular location is the cell membrane. Functionally, high-affinity nickel-specific transporter responsible for nickel uptake and required for high levels of activity of urease URE1. Does not transport cobalt. Plays a role in host brain invasion. This chain is High-affinity nickel transport protein, found in Cryptococcus neoformans var. grubii serotype A (strain H99 / ATCC 208821 / CBS 10515 / FGSC 9487) (Filobasidiella neoformans var. grubii).